Reading from the N-terminus, the 593-residue chain is Efflux pump FUBT (593 aa).

The interval 1–44 is disordered; the sequence is MAIDPQPSSPSLSSETIANDTIGNDNNVNEPSVEPKTQENQHTV. The segment covering 9–30 has biased composition (polar residues); the sequence is SPSLSSETIANDTIGNDNNVNE. Residue Asn-19 is glycosylated (N-linked (GlcNAc...) asparagine). The next 12 helical transmembrane spans lie at 98–118, 135–155, 167–187, 195–215, 227–247, 254–274, 337–357, 367–387, 410–430, 438–458, 468–488, and 503–523; these read WAFVLLQSLACLATTFASSAY, VATLGISLYVLGFTFGPLIWA, FFFTFMVATAFSAGAAGAGSI, FLTGSIGSAPLSNAPALIADM, MFSGAPFLGPAIGPIAGGFLG, WLHGLMAAFTGVTWIACTVFI, IYISIIYGTMYMCFAAFPIVF, IGGLAFTGIVIGVVLSIISFA, LPPAIMGSLLIPIGLFWFAWT, IVPIIGTVFFAWGLVLVFMAL, IFAASIMAANSALRSLFGAAF, and WASSIPAFLALACVPFPFLFY. Residues 570 to 593 are disordered; the sequence is THNSHASAAHSHGHRRSLSYTRSV.

The protein belongs to the major facilitator superfamily. DHA1 family. Polyamines/proton antiporter (TC 2.A.1.2.16) subfamily.

Its subcellular location is the cell membrane. Functionally, efflux pump involved in export of fusaric acid, a mycotoxin with low to moderate toxicity to animals and humans, but with high phytotoxic properties. Constitutes a self-protecting mechanism of the fungus against critical levels of FSA within the cell. In Fusarium oxysporum (Fusarium vascular wilt), this protein is Efflux pump FUBT.